A 62-amino-acid polypeptide reads, in one-letter code: Photosystem II reaction center protein Z (62 aa).

A run of 2 helical transmembrane segments spans residues 8–28 (AVFA…VVFA) and 41–61 (FSGT…NSLI).

Belongs to the PsbZ family. In terms of assembly, PSII is composed of 1 copy each of membrane proteins PsbA, PsbB, PsbC, PsbD, PsbE, PsbF, PsbH, PsbI, PsbJ, PsbK, PsbL, PsbM, PsbT, PsbY, PsbZ, Psb30/Ycf12, at least 3 peripheral proteins of the oxygen-evolving complex and a large number of cofactors. It forms dimeric complexes.

It localises to the plastid. Its subcellular location is the chloroplast thylakoid membrane. Its function is as follows. May control the interaction of photosystem II (PSII) cores with the light-harvesting antenna, regulates electron flow through the 2 photosystem reaction centers. PSII is a light-driven water plastoquinone oxidoreductase, using light energy to abstract electrons from H(2)O, generating a proton gradient subsequently used for ATP formation. The protein is Photosystem II reaction center protein Z of Liriodendron tulipifera (Tuliptree).